The sequence spans 145 residues: Nucleoside diphosphate kinase (145 aa).

ATP is bound by residues Lys11, Phe59, Arg87, Thr93, Arg104, and Asn114. Residue His117 is the Pros-phosphohistidine intermediate of the active site.

The protein belongs to the NDK family. Homotetramer. Mg(2+) is required as a cofactor.

It is found in the cytoplasm. It carries out the reaction a 2'-deoxyribonucleoside 5'-diphosphate + ATP = a 2'-deoxyribonucleoside 5'-triphosphate + ADP. The catalysed reaction is a ribonucleoside 5'-diphosphate + ATP = a ribonucleoside 5'-triphosphate + ADP. Functionally, major role in the synthesis of nucleoside triphosphates other than ATP. The ATP gamma phosphate is transferred to the NDP beta phosphate via a ping-pong mechanism, using a phosphorylated active-site intermediate. This Myxococcus xanthus protein is Nucleoside diphosphate kinase.